The following is a 177-amino-acid chain: ADP-ribosylation factor-like protein 17 (177 aa).

G2 carries the N-myristoyl glycine lipid modification. Residues 24-31 (SLDTAGKT), 67-71 (DVGSH), and 125-128 (LPHS) contribute to the GTP site.

It belongs to the small GTPase superfamily. Arf family.

Its subcellular location is the golgi apparatus. GTP-binding protein that functions as an allosteric activator of the cholera toxin catalytic subunit, an ADP-ribosyltransferase. Involved in protein trafficking; may modulate vesicle budding and uncoating within the Golgi apparatus. This is ADP-ribosylation factor-like protein 17 (ARL17A) from Homo sapiens (Human).